Reading from the N-terminus, the 244-residue chain is 1-(5-phosphoribosyl)-5-[(5-phosphoribosylamino)methylideneamino] imidazole-4-carboxamide isomerase (244 aa).

D8 (proton acceptor) is an active-site residue. Residue D129 is the Proton donor of the active site.

Belongs to the HisA/HisF family.

The protein localises to the cytoplasm. The enzyme catalyses 1-(5-phospho-beta-D-ribosyl)-5-[(5-phospho-beta-D-ribosylamino)methylideneamino]imidazole-4-carboxamide = 5-[(5-phospho-1-deoxy-D-ribulos-1-ylimino)methylamino]-1-(5-phospho-beta-D-ribosyl)imidazole-4-carboxamide. The protein operates within amino-acid biosynthesis; L-histidine biosynthesis; L-histidine from 5-phospho-alpha-D-ribose 1-diphosphate: step 4/9. The chain is 1-(5-phosphoribosyl)-5-[(5-phosphoribosylamino)methylideneamino] imidazole-4-carboxamide isomerase from Allorhizobium ampelinum (strain ATCC BAA-846 / DSM 112012 / S4) (Agrobacterium vitis (strain S4)).